The sequence spans 504 residues: Maturase K (504 aa).

This sequence belongs to the intron maturase 2 family. MatK subfamily.

It localises to the plastid. The protein localises to the chloroplast. Usually encoded in the trnK tRNA gene intron. Probably assists in splicing its own and other chloroplast group II introns. The polypeptide is Maturase K (Guizotia abyssinica (Niger)).